We begin with the raw amino-acid sequence, 459 residues long: Cysteine--tRNA ligase (459 aa).

Cysteine 28 serves as a coordination point for Zn(2+). The short motif at 30-40 (ITIYDLCHIGH) is the 'HIGH' region element. Zn(2+) is bound by residues cysteine 209, histidine 234, and glutamate 238. The 'KMSKS' region signature appears at 266–270 (KMSKS). Position 269 (lysine 269) interacts with ATP.

It belongs to the class-I aminoacyl-tRNA synthetase family. Monomer. It depends on Zn(2+) as a cofactor.

Its subcellular location is the cytoplasm. It carries out the reaction tRNA(Cys) + L-cysteine + ATP = L-cysteinyl-tRNA(Cys) + AMP + diphosphate. In Shewanella denitrificans (strain OS217 / ATCC BAA-1090 / DSM 15013), this protein is Cysteine--tRNA ligase.